Consider the following 207-residue polypeptide: 8-oxoguanine DNA glycosylase/AP lyase (207 aa).

Residues Lys-128 and Asp-146 contribute to the active site.

Belongs to the type-2 OGG1 family.

It carries out the reaction 2'-deoxyribonucleotide-(2'-deoxyribose 5'-phosphate)-2'-deoxyribonucleotide-DNA = a 3'-end 2'-deoxyribonucleotide-(2,3-dehydro-2,3-deoxyribose 5'-phosphate)-DNA + a 5'-end 5'-phospho-2'-deoxyribonucleoside-DNA + H(+). In terms of biological role, catalyzes the excision of an oxidatively damaged form of guanine (7,8-dihydro-8-oxoguanine = 8-oxoG) from DNA. Also cleaves the DNA backbone at apurinic/apyrimidinic sites (AP sites). The sequence is that of 8-oxoguanine DNA glycosylase/AP lyase from Saccharolobus solfataricus (strain ATCC 35092 / DSM 1617 / JCM 11322 / P2) (Sulfolobus solfataricus).